The primary structure comprises 222 residues: Histidine biosynthesis bifunctional protein HisIE (222 aa).

The interval 1-128 (MQPLSPAFID…SNALSPPADA (128 aa)) is phosphoribosyl-AMP cyclohydrolase. A phosphoribosyl-ATP pyrophosphohydrolase region spans residues 129 to 222 (CTELFRVIES…AARRGAPRRH (94 aa)).

In the N-terminal section; belongs to the PRA-CH family. The protein in the C-terminal section; belongs to the PRA-PH family.

It localises to the cytoplasm. It carries out the reaction 1-(5-phospho-beta-D-ribosyl)-ATP + H2O = 1-(5-phospho-beta-D-ribosyl)-5'-AMP + diphosphate + H(+). It catalyses the reaction 1-(5-phospho-beta-D-ribosyl)-5'-AMP + H2O = 1-(5-phospho-beta-D-ribosyl)-5-[(5-phospho-beta-D-ribosylamino)methylideneamino]imidazole-4-carboxamide. Its pathway is amino-acid biosynthesis; L-histidine biosynthesis; L-histidine from 5-phospho-alpha-D-ribose 1-diphosphate: step 2/9. The protein operates within amino-acid biosynthesis; L-histidine biosynthesis; L-histidine from 5-phospho-alpha-D-ribose 1-diphosphate: step 3/9. In Parasynechococcus marenigrum (strain WH8102), this protein is Histidine biosynthesis bifunctional protein HisIE.